The primary structure comprises 493 residues: Aspartyl/glutamyl-tRNA(Asn/Gln) amidotransferase subunit B (493 aa).

Residues 268 to 291 are disordered; it reads HYQEADGSTSKGRPKETAEDYRYF. Residues 280-291 show a composition bias toward basic and acidic residues; sequence RPKETAEDYRYF.

Belongs to the GatB/GatE family. GatB subfamily. In terms of assembly, heterotrimer of A, B and C subunits.

It carries out the reaction L-glutamyl-tRNA(Gln) + L-glutamine + ATP + H2O = L-glutaminyl-tRNA(Gln) + L-glutamate + ADP + phosphate + H(+). The enzyme catalyses L-aspartyl-tRNA(Asn) + L-glutamine + ATP + H2O = L-asparaginyl-tRNA(Asn) + L-glutamate + ADP + phosphate + 2 H(+). In terms of biological role, allows the formation of correctly charged Asn-tRNA(Asn) or Gln-tRNA(Gln) through the transamidation of misacylated Asp-tRNA(Asn) or Glu-tRNA(Gln) in organisms which lack either or both of asparaginyl-tRNA or glutaminyl-tRNA synthetases. The reaction takes place in the presence of glutamine and ATP through an activated phospho-Asp-tRNA(Asn) or phospho-Glu-tRNA(Gln). The polypeptide is Aspartyl/glutamyl-tRNA(Asn/Gln) amidotransferase subunit B (Corynebacterium glutamicum (strain ATCC 13032 / DSM 20300 / JCM 1318 / BCRC 11384 / CCUG 27702 / LMG 3730 / NBRC 12168 / NCIMB 10025 / NRRL B-2784 / 534)).